Reading from the N-terminus, the 196-residue chain is Agamous-like MADS-box protein AGL27 (196 aa).

The region spanning M1–D61 is the MADS-box domain. One can recognise a K-box domain in the interval A80 to L170. Residues E175 to N196 form a disordered region.

Interacts with AGL39, AGL97 and AGL74. In terms of tissue distribution, expressed in most plant tissues, embryo, seedlings, roots, leaves, stems, inflorescence, pollen, siliques and flowers.

The protein localises to the nucleus. Probable transcription factor involved in the negative regulation of flowering time in both long and short days, probably through the photoperiodic and vernalization pathways. Prevents premature flowering. The sequence is that of Agamous-like MADS-box protein AGL27 (AGL27) from Arabidopsis thaliana (Mouse-ear cress).